Here is a 224-residue protein sequence, read N- to C-terminus: Octanoyltransferase (224 aa).

Positions 29–224 (PGTPDELWLC…GDRLESYLSP (196 aa)) constitute a BPL/LPL catalytic domain. Substrate is bound by residues 68–75 (RGGQVTYH), 157–159 (ALG), and 170–172 (GLA). Catalysis depends on cysteine 188, which acts as the Acyl-thioester intermediate.

It belongs to the LipB family.

The protein resides in the cytoplasm. The catalysed reaction is octanoyl-[ACP] + L-lysyl-[protein] = N(6)-octanoyl-L-lysyl-[protein] + holo-[ACP] + H(+). It functions in the pathway protein modification; protein lipoylation via endogenous pathway; protein N(6)-(lipoyl)lysine from octanoyl-[acyl-carrier-protein]: step 1/2. In terms of biological role, catalyzes the transfer of endogenously produced octanoic acid from octanoyl-acyl-carrier-protein onto the lipoyl domains of lipoate-dependent enzymes. Lipoyl-ACP can also act as a substrate although octanoyl-ACP is likely to be the physiological substrate. The polypeptide is Octanoyltransferase (Methylibium petroleiphilum (strain ATCC BAA-1232 / LMG 22953 / PM1)).